The primary structure comprises 388 residues: Chalcone synthase (388 aa).

C164 is an active-site residue.

This sequence belongs to the thiolase-like superfamily. Chalcone/stilbene synthases family.

The catalysed reaction is (E)-4-coumaroyl-CoA + 3 malonyl-CoA + 3 H(+) = 2',4,4',6'-tetrahydroxychalcone + 3 CO2 + 4 CoA. It participates in secondary metabolite biosynthesis; flavonoid biosynthesis. Functionally, the primary product of this enzyme is 4,2',4',6'-tetrahydroxychalcone (also termed naringenin-chalcone or chalcone) which can under specific conditions spontaneously isomerize into naringenin. The protein is Chalcone synthase (CHS) of Vigna unguiculata (Cowpea).